We begin with the raw amino-acid sequence, 464 residues long: Kynureninase (464 aa).

M1 carries the N-acetylmethionine modification. Pyridoxal 5'-phosphate is bound by residues L137, T138, 165–168 (FPSD), S221, D250, H253, and Y275. The residue at position 276 (K276) is an N6-(pyridoxal phosphate)lysine. Pyridoxal 5'-phosphate-binding residues include W305 and N333.

The protein belongs to the kynureninase family. In terms of assembly, homodimer. It depends on pyridoxal 5'-phosphate as a cofactor. In terms of tissue distribution, high levels in liver and kidney. Also detected in heart, retina, ovary. Lung, testis and brain.

The protein resides in the cytoplasm. It localises to the cytosol. The catalysed reaction is L-kynurenine + H2O = anthranilate + L-alanine + H(+). The enzyme catalyses 3-hydroxy-L-kynurenine + H2O = 3-hydroxyanthranilate + L-alanine + H(+). It participates in amino-acid degradation; L-kynurenine degradation; L-alanine and anthranilate from L-kynurenine: step 1/1. It functions in the pathway cofactor biosynthesis; NAD(+) biosynthesis; quinolinate from L-kynurenine: step 2/3. Inhibited by o-methylbenzoylalanine (OMBA). Functionally, catalyzes the cleavage of L-kynurenine (L-Kyn) and L-3-hydroxykynurenine (L-3OHKyn) into anthranilic acid (AA) and 3-hydroxyanthranilic acid (3-OHAA), respectively. Has a preference for the L-3-hydroxy form. Also has cysteine-conjugate-beta-lyase activity. This Rattus norvegicus (Rat) protein is Kynureninase (Kynu).